Reading from the N-terminus, the 396-residue chain is Elongation factor Tu (396 aa).

Residues 11–205 (KPHVNIGTIG…IVDEYIPTPE (195 aa)) form the tr-type G domain. The interval 20-27 (GHVDHGKT) is G1. 20-27 (GHVDHGKT) contacts GTP. A Mg(2+)-binding site is contributed by threonine 27. Residues 61-65 (GITIN) are G2. The segment at 82–85 (DAPG) is G3. GTP is bound by residues 82–86 (DAPGH) and 137–140 (NKCD). The G4 stretch occupies residues 137 to 140 (NKCD). The interval 175-177 (SAL) is G5.

This sequence belongs to the TRAFAC class translation factor GTPase superfamily. Classic translation factor GTPase family. EF-Tu/EF-1A subfamily. As to quaternary structure, monomer.

It localises to the cytoplasm. The catalysed reaction is GTP + H2O = GDP + phosphate + H(+). Its function is as follows. GTP hydrolase that promotes the GTP-dependent binding of aminoacyl-tRNA to the A-site of ribosomes during protein biosynthesis. The sequence is that of Elongation factor Tu from Lactobacillus acidophilus (strain ATCC 700396 / NCK56 / N2 / NCFM).